The primary structure comprises 113 residues: Cell cycle protein GpsB (113 aa).

A coiled-coil region spans residues 37 to 63 (KDYETYATLVKSLRQEIADLKEELTRK). A disordered region spans residues 61–82 (TRKPQVSSAPSPSHPDPIDVAA).

The protein belongs to the GpsB family. As to quaternary structure, forms polymers through the coiled coil domains. Interacts with PBP1, MreC and EzrA.

It is found in the cytoplasm. Functionally, divisome component that associates with the complex late in its assembly, after the Z-ring is formed, and is dependent on DivIC and PBP2B for its recruitment to the divisome. Together with EzrA, is a key component of the system that regulates PBP1 localization during cell cycle progression. Its main role could be the removal of PBP1 from the cell pole after pole maturation is completed. Also contributes to the recruitment of PBP1 to the division complex. Not essential for septum formation. In Streptococcus pneumoniae (strain ATCC 700669 / Spain 23F-1), this protein is Cell cycle protein GpsB.